The sequence spans 351 residues: Chorismate synthase (351 aa).

The tract at residues 39–60 (EDIQRDLERRRPGKRLTSPRGE) is disordered. Residues Arg48 and Arg53 each coordinate NADP(+). FMN is bound by residues 124–126 (RSS), Ala276, 291–295 (KPIPS), and Arg317.

It belongs to the chorismate synthase family. As to quaternary structure, homotetramer. It depends on FMNH2 as a cofactor.

It catalyses the reaction 5-O-(1-carboxyvinyl)-3-phosphoshikimate = chorismate + phosphate. The protein operates within metabolic intermediate biosynthesis; chorismate biosynthesis; chorismate from D-erythrose 4-phosphate and phosphoenolpyruvate: step 7/7. Functionally, catalyzes the anti-1,4-elimination of the C-3 phosphate and the C-6 proR hydrogen from 5-enolpyruvylshikimate-3-phosphate (EPSP) to yield chorismate, which is the branch point compound that serves as the starting substrate for the three terminal pathways of aromatic amino acid biosynthesis. This reaction introduces a second double bond into the aromatic ring system. In Syntrophobacter fumaroxidans (strain DSM 10017 / MPOB), this protein is Chorismate synthase.